Here is a 245-residue protein sequence, read N- to C-terminus: Ribonuclease PH (245 aa).

Phosphate-binding positions include Arg-86 and 124-126 (GTR).

This sequence belongs to the RNase PH family. Homohexameric ring arranged as a trimer of dimers. It has been suggested that the active form is the dimer which binds tRNA and that the hexameric form protects the substrate recognition loop (approximately residues 65-82) from proteolysis.

It carries out the reaction tRNA(n+1) + phosphate = tRNA(n) + a ribonucleoside 5'-diphosphate. Phosphorolytic 3'-5' exoribonuclease that plays an important role in tRNA 3'-end maturation. Removes nucleotide residues following the 3'-CCA terminus of tRNAs; can also add nucleotides to the ends of RNA molecules by using nucleoside diphosphates as substrates, but this may not be physiologically important. Probably plays a role in initiation of 16S rRNA degradation (leading to ribosome degradation) during starvation. Plays a role in the secondary pathway of 23S rRNA 3' end maturation. The chain is Ribonuclease PH from Bacillus subtilis (strain 168).